A 128-amino-acid chain; its full sequence is Fluoride-specific ion channel FluC (128 aa).

4 helical membrane-spanning segments follow: residues 2–22 (LTFA…GAWL), 37–57 (WGTL…VALI), 65–85 (AWIR…FSTF), and 101–121 (AAAY…LGLA). Na(+)-binding residues include G77 and T80.

The protein belongs to the fluoride channel Fluc/FEX (TC 1.A.43) family.

It localises to the cell inner membrane. It carries out the reaction fluoride(in) = fluoride(out). Na(+) is not transported, but it plays an essential structural role and its presence is essential for fluoride channel function. In terms of biological role, fluoride-specific ion channel. Important for reducing fluoride concentration in the cell, thus reducing its toxicity. The sequence is that of Fluoride-specific ion channel FluC from Bordetella bronchiseptica (strain ATCC BAA-588 / NCTC 13252 / RB50) (Alcaligenes bronchisepticus).